The following is a 173-amino-acid chain: 2-C-methyl-D-erythritol 2,4-cyclodiphosphate synthase (173 aa).

2 residues coordinate a divalent metal cation: Asp17 and His19. 4-CDP-2-C-methyl-D-erythritol 2-phosphate-binding positions include 17-19 and 49-50; these read DVH and HS. His57 is a binding site for a divalent metal cation. 4-CDP-2-C-methyl-D-erythritol 2-phosphate-binding positions include 76 to 80, 147 to 150, and Arg157; these read FPNTD and TTTE.

This sequence belongs to the IspF family. Homotrimer. A divalent metal cation is required as a cofactor.

It catalyses the reaction 4-CDP-2-C-methyl-D-erythritol 2-phosphate = 2-C-methyl-D-erythritol 2,4-cyclic diphosphate + CMP. It functions in the pathway isoprenoid biosynthesis; isopentenyl diphosphate biosynthesis via DXP pathway; isopentenyl diphosphate from 1-deoxy-D-xylulose 5-phosphate: step 4/6. Involved in the biosynthesis of isopentenyl diphosphate (IPP) and dimethylallyl diphosphate (DMAPP), two major building blocks of isoprenoid compounds. Catalyzes the conversion of 4-diphosphocytidyl-2-C-methyl-D-erythritol 2-phosphate (CDP-ME2P) to 2-C-methyl-D-erythritol 2,4-cyclodiphosphate (ME-CPP) with a corresponding release of cytidine 5-monophosphate (CMP). The sequence is that of 2-C-methyl-D-erythritol 2,4-cyclodiphosphate synthase from Ehrlichia ruminantium (strain Welgevonden).